Reading from the N-terminus, the 197-residue chain is Protein RESISTANCE TO PHYTOPHTHORA 1, chloroplastic (197 aa).

The transit peptide at 1–52 (MSWSLCSTHGVSSSIALTYGFRHRRRSTFRIFATSDGLEPKDDPPESPLPSS) directs the protein to the chloroplast. The disordered stretch occupies residues 35-56 (SDGLEPKDDPPESPLPSSSSAL). Helical transmembrane passes span 93-113 (FEVQ…NLLF), 120-140 (LWRL…LRAR), 150-170 (LNYL…FWKS), and 173-193 (LVWS…LGWL).

The protein resides in the plastid. Its subcellular location is the chloroplast. It is found in the membrane. Functionally, plays a positive role in the immune response to the oomycetes P.brassicae, including induced oxidative burst (e.g. H(2)O(2)) and enhanced expression of defense-related genes. The chain is Protein RESISTANCE TO PHYTOPHTHORA 1, chloroplastic from Arabidopsis thaliana (Mouse-ear cress).